The primary structure comprises 981 residues: Peroxisomal ATPase PEX6 (981 aa).

Omega-N-methylarginine is present on arginine 119. Residues 471–478 (GPPGSGKT) and 745–752 (GPPGTGKT) each bind ATP.

This sequence belongs to the AAA ATPase family. As to quaternary structure, interacts with PEX1; forming the PEX1-PEX6 AAA ATPase complex, which is composed of a heterohexamer formed by a trimer of PEX1-PEX6 dimers. Interacts with PEX26; interaction is direct and promotes recruitment to peroxisomal membranes. Interacts with ZFAND6. In the teeth, expressed in ameloblasts and odontoblasts. Expressed in the retina, at higher levels in the ganglion cell layer and photoreceptor layer at the joint between the outer and inner segments.

The protein resides in the cytoplasm. The protein localises to the cytosol. It localises to the peroxisome membrane. Its subcellular location is the cell projection. It is found in the cilium. The protein resides in the photoreceptor outer segment. It catalyses the reaction ATP + H2O = ADP + phosphate + H(+). In terms of biological role, component of the PEX1-PEX6 AAA ATPase complex, a protein dislocase complex that mediates the ATP-dependent extraction of the PEX5 receptor from peroxisomal membranes, an essential step for PEX5 recycling. Specifically recognizes PEX5 monoubiquitinated at 'Cys-11', and pulls it out of the peroxisome lumen through the PEX2-PEX10-PEX12 retrotranslocation channel. Extraction by the PEX1-PEX6 AAA ATPase complex is accompanied by unfolding of the TPR repeats and release of bound cargo from PEX5. This Mus musculus (Mouse) protein is Peroxisomal ATPase PEX6.